Consider the following 254-residue polypeptide: Aspartate/glutamate leucyltransferase (254 aa).

It belongs to the R-transferase family. Bpt subfamily.

The protein localises to the cytoplasm. The catalysed reaction is N-terminal L-glutamyl-[protein] + L-leucyl-tRNA(Leu) = N-terminal L-leucyl-L-glutamyl-[protein] + tRNA(Leu) + H(+). It carries out the reaction N-terminal L-aspartyl-[protein] + L-leucyl-tRNA(Leu) = N-terminal L-leucyl-L-aspartyl-[protein] + tRNA(Leu) + H(+). Functions in the N-end rule pathway of protein degradation where it conjugates Leu from its aminoacyl-tRNA to the N-termini of proteins containing an N-terminal aspartate or glutamate. The polypeptide is Aspartate/glutamate leucyltransferase (Maricaulis maris (strain MCS10) (Caulobacter maris)).